Here is a 441-residue protein sequence, read N- to C-terminus: Ribosomal protein uS12 methylthiotransferase RimO (441 aa).

Residues 8 to 118 (PKIGFVSLGC…VLEHVHHYVP (111 aa)) enclose the MTTase N-terminal domain. [4Fe-4S] cluster-binding residues include Cys-17, Cys-53, Cys-82, Cys-150, Cys-154, and Cys-157. Positions 136–373 (LTPRHYAYLK…MQLQQQISAE (238 aa)) constitute a Radical SAM core domain. One can recognise a TRAM domain in the interval 376-441 (QEKVGREILV…DEYDLWGSRV (66 aa)).

It belongs to the methylthiotransferase family. RimO subfamily. It depends on [4Fe-4S] cluster as a cofactor.

Its subcellular location is the cytoplasm. It carries out the reaction L-aspartate(89)-[ribosomal protein uS12]-hydrogen + (sulfur carrier)-SH + AH2 + 2 S-adenosyl-L-methionine = 3-methylsulfanyl-L-aspartate(89)-[ribosomal protein uS12]-hydrogen + (sulfur carrier)-H + 5'-deoxyadenosine + L-methionine + A + S-adenosyl-L-homocysteine + 2 H(+). Its function is as follows. Catalyzes the methylthiolation of an aspartic acid residue of ribosomal protein uS12. This Citrobacter koseri (strain ATCC BAA-895 / CDC 4225-83 / SGSC4696) protein is Ribosomal protein uS12 methylthiotransferase RimO.